A 526-amino-acid polypeptide reads, in one-letter code: MKQQVIIFDTTLRDGEQALQASLSVKEKLQIALALERMGVDVMEVGFPISSPGDFASVRAIAQRVKQSRVCALARCVDADIDAAAEALRAADAFRIHTFLATSTLHLESKLRRSFDDAIAMARHAILRARRYTDDVEFSCEDAGRTPIDNLCRIVEAAIDAGAKTVNIPDTVGYTTPYQFGGIIHTLFERVPNIDKAVISVHCHDDLGMACANSISAIQSGARQVEGTLNGIGERAGNCALEEVIMAIRTRQDLLRVHTGIRHQEIYRTSQLVSQLCNMPIPANKAVVGANAFAHSSGIHQDGVLKNRENYEIMTPESIGLPQTQLNLTSRSGRAAVKHRMEEMGYCEGNDFDLERLYQAFLRLADKKGQVFDYDLEALAFIDRQQEEADHFRLEYFSVQSGSSVMATASVRLICGAETRAEAATGNGPVDAVYQAISRITDISVDIVKYQLSAKGQGRDALGQVDIVAEHQGRRFHGVGLTTDIVESSAQALIHVLNHIWRARQVEQERQRLHSPVPSISTSSTH.

A Pyruvate carboxyltransferase domain is found at Val-5–Tyr-267. Positions 14, 202, 204, and 238 each coordinate Mn(2+). The tract at residues Arg-393–His-526 is regulatory domain.

It belongs to the alpha-IPM synthase/homocitrate synthase family. LeuA type 1 subfamily. As to quaternary structure, homodimer. The cofactor is Mn(2+).

Its subcellular location is the cytoplasm. The enzyme catalyses 3-methyl-2-oxobutanoate + acetyl-CoA + H2O = (2S)-2-isopropylmalate + CoA + H(+). It functions in the pathway amino-acid biosynthesis; L-leucine biosynthesis; L-leucine from 3-methyl-2-oxobutanoate: step 1/4. Functionally, catalyzes the condensation of the acetyl group of acetyl-CoA with 3-methyl-2-oxobutanoate (2-ketoisovalerate) to form 3-carboxy-3-hydroxy-4-methylpentanoate (2-isopropylmalate). The sequence is that of 2-isopropylmalate synthase from Edwardsiella ictaluri (strain 93-146).